We begin with the raw amino-acid sequence, 1373 residues long: Disease resistance protein RRS1 (1373 aa).

One can recognise a TIR domain in the interval 5–146; the sequence is EKDEEFVCIS…EIVRDVYETH (142 aa). The 252-residue stretch at 170 to 421 folds into the NB-ARC domain; sequence IGIRCVGIWG…LLEGCGFFPH (252 aa). 179–186 is an ATP binding site; it reads GMPGIGKT. LRR repeat units follow at residues 498–522, 535–553, 554–575, 577–598, 621–646, 665–688, 742–766, 768–793, and 831–854; these read SEEI…AFKN, NPEV…HSLP, NELR…NFDP, HLVE…TKNL, AENL…RLLR, PPNI…TVKP, LPNM…SIQG, PRFL…SLEI, and PRNL…PLSL. The Nuclear localization signal signature appears at 988–1005; sequence RNFHCWAPGKVVPKVRKD. Positions 1204-1272 form a DNA-binding region, WRKY; sequence IPAIDEGDLW…YLSEHNHPRP (69 aa). Residues 1300–1323 are disordered; sequence RVFQNKDEPNKPHLPSSSTPPGNA.

As to quaternary structure, interacts with PopP2, a R.solanacearum type III effector.

The protein resides in the nucleus. Transcription factor. Interacts specifically with the W box (5'-(T)TGAC[CT]-3'), a frequently occurring elicitor-responsive cis-acting element. Also acts as a disease resistance protein involved in resistance to fungal and bacterial pathogens, including R.solanacearum, P.syringae pv. tomato and C.higginsianum. The protein is Disease resistance protein RRS1 of Arabidopsis thaliana (Mouse-ear cress).